The primary structure comprises 366 residues: Homer protein homolog 1 (366 aa).

Positions 1-110 (MGEQPIFSTR…EKFQEFKEAA (110 aa)) constitute a WH1 domain. An N-acetylglycine modification is found at Gly2. Residues 114 to 189 (KEKSQEKMEL…RTQGLSHASS (76 aa)) are disordered. A compositionally biased stretch (polar residues) spans 138–147 (SPLTPESING). Residues 193 to 364 (KHWEAELATL…LRDNLAKLLE (172 aa)) adopt a coiled-coil conformation. Residues 302 to 366 (KLQEVEIRNK…DNLAKLLECS (65 aa)) form a required for tetramerization region. Ser318 is modified (phosphoserine).

It belongs to the Homer family. In terms of assembly, tetramer; this tetrameric structure is critical for forming the high-order complex with SHANK1, which in turn is necessary for the structural and functional integrity of dendritic spines. Interacts with GRM1, GRM5, ITPR1, DYN3, RYR1, RYR2 and SHANK3. Interacts with IFT57 and OPHN1. Isoform 1 and isoform 2 encode coiled-coil structures that mediate homo- and heteromultimerization. Interacts with SHANK1; forms high-order polymerized complex with a mesh-like network structure, at least composed of SHANK1, HOMER1 and DLGAP1; the complex formation is SHANK1 multimerization dependent. Interacts with NFATC4. Interacts with DAGLA (via PPXXF motif); this interaction is required for the cell membrane localization of DAGLA. Interacts with SRGAP2. Highly expressed in cortex, Purkinje cells of the cerebellum, hippocampus, striatum and olfactory bulb. Isoform 1 and isoform 3 are expressed in skeletal and cardiac muscle.

It localises to the cytoplasm. It is found in the postsynaptic density. Its subcellular location is the synapse. The protein resides in the cell projection. The protein localises to the dendritic spine. In terms of biological role, postsynaptic density scaffolding protein. Binds and cross-links cytoplasmic regions of GRM1, GRM5, ITPR1, DNM3, RYR1, RYR2, SHANK1 and SHANK3. By physically linking GRM1 and GRM5 with ER-associated ITPR1 receptors, it aids the coupling of surface receptors to intracellular calcium release. May also couple GRM1 to PI3 kinase through its interaction with AGAP2. Differentially regulates the functions of the calcium activated channel ryanodine receptors RYR1 and RYR2. Isoform 1 decreases the activity of RYR2, and increases the activity of RYR1, whereas isoform 3 counteracts the effects by competing for binding sites. Isoform 1 regulates the trafficking and surface expression of GRM5. Isoform 3 acts as a natural dominant negative, in dynamic competition with constitutively expressed isoform 1, and isoform 2 to regulate synaptic metabotropic glutamate function. Isoform 3, may be involved in the structural changes that occur at synapses during long-lasting neuronal plasticity and development. Forms a high-order complex with SHANK1, which in turn is necessary for the structural and functional integrity of dendritic spines. Negatively regulates T cell activation by inhibiting the calcineurin-NFAT pathway. Acts by competing with calcineurin/PPP3CA for NFAT protein binding, hence preventing NFAT activation by PPP3CA. The sequence is that of Homer protein homolog 1 from Rattus norvegicus (Rat).